We begin with the raw amino-acid sequence, 757 residues long: Dolichyl-diphosphooligosaccharide--protein glycosyltransferase subunit stt-3 (757 aa).

Residues 1 to 13 (MTSTTAARTASSR) are Cytoplasmic-facing. Residues 14–34 (VGATTLLTIVVLALAWFVGFA) form a helical membrane-spanning segment. Topologically, residues 35–121 (SRLFAIVRFE…VHIREVCVFL (87 aa)) are lumenal. The DXD motif 1 signature appears at 49-51 (EFD). D51 lines the Mn(2+) pocket. A helical transmembrane segment spans residues 122–140 (APTFSGLTAIATYLLTKEL). Topologically, residues 141 to 142 (WS) are cytoplasmic. The helical transmembrane segment at 143 to 160 (PGAGLFAACFIAISPGYT) threads the bilayer. At 161 to 171 (SRSVAGSYDNE) the chain is on the lumenal side. D169 and E171 together coordinate Mn(2+). The short motif at 169 to 171 (DNE) is the DXD motif 2 element. Residues 172-191 (GIAIFALQFTYYLWVKSLKT) traverse the membrane as a helical segment. Residues 192 to 193 (GS) are Cytoplasmic-facing. A helical transmembrane segment spans residues 194–208 (IMWASLCALSYFYMV). Over 209 to 210 (SA) the chain is Lumenal. 2 helical membrane passes run 211–235 (WGGY…GRYS) and 236–261 (SRLF…FVGF). The Lumenal portion of the chain corresponds to 262–269 (QPVRTSEH). A helical membrane pass occupies residues 270–289 (MPAFGVFGLLQIVALMHYAR). Residues 290–299 (NRITRQQFMT) lie on the Cytoplasmic side of the membrane. Residues 300-320 (LFVGGLTILGALSVVVYFALV) traverse the membrane as a helical segment. The Lumenal portion of the chain corresponds to 321 to 358 (WGGYVAPFSGRFYSLWDTGYAKIHIPIIASVSEHQPTT). An SVSE motif motif is present at residues 350 to 353 (SVSE). A helical transmembrane segment spans residues 359–381 (WVSFFFDLHITAAVFPVGLWYCI). At 382–387 (KKVNDE) the chain is on the cytoplasmic side. The chain crosses the membrane as a helical span at residues 388–404 (RVFIILYAVSAVYFAGV). At 405-408 (MVRL) the chain is on the lumenal side. Residue R407 participates in dolichyl diphosphooligosaccharide binding. Residues 409-430 (MLTLTPAVCVLAGIGFSYTFEK) form a helical membrane-spanning segment. Over 431–469 (YLKDEETKERSSSQSGTTKDEKLYDKAAKNVKSRNANDG) the chain is Cytoplasmic. Residues 470 to 495 (DESGVSSNVRTIISIILVIFLLMFVV) form a helical membrane-spanning segment. Over 496-757 (HATYVTSNAY…IRPAPTASKA (262 aa)) the chain is Lumenal. Positions 547 to 549 (WWD) are interacts with target acceptor peptide in protein substrate. The short motif at 547–551 (WWDYG) is the WWDYG motif element. Y552 is a dolichyl diphosphooligosaccharide binding site. N-linked (GlcNAc...) asparagine glycans are attached at residues N559 and N566. N570 is a glycosylation site (N-linked (GlcNAc...) (high mannose) asparagine). The N-linked (GlcNAc...) asparagine glycan is linked to N584. A DK motif motif is present at residues 614 to 621 (DINKFLWM). Positions 721–757 (RPTVKSEEATIPIKGKKATQGKNKKGVIRPAPTASKA) are disordered. Basic residues predominate over residues 734–747 (KGKKATQGKNKKGV).

This sequence belongs to the STT3 family. Component of the oligosaccharyltransferase (OST) complex. Mg(2+) is required as a cofactor. The cofactor is Mn(2+).

Its subcellular location is the endoplasmic reticulum membrane. The enzyme catalyses a di-trans,poly-cis-dolichyl diphosphooligosaccharide + L-asparaginyl-[protein] = N(4)-(oligosaccharide-(1-&gt;4)-N-acetyl-beta-D-glucosaminyl-(1-&gt;4)-N-acetyl-beta-D-glucosaminyl)-L-asparaginyl-[protein] + a di-trans,poly-cis-dolichyl diphosphate + H(+). The protein operates within protein modification; protein glycosylation. Functionally, catalytic subunit of the oligosaccharyl transferase (OST) complex that catalyzes the initial transfer of a defined glycan (Glc(3)Man(9)GlcNAc(2) in eukaryotes) from the lipid carrier dolichol-pyrophosphate to an asparagine residue within an Asn-X-Ser/Thr consensus motif in nascent polypeptide chains, the first step in protein N-glycosylation. N-glycosylation occurs cotranslationally and the complex associates with the Sec61 complex at the channel-forming translocon complex that mediates protein translocation across the endoplasmic reticulum (ER). All subunits are required for a maximal enzyme activity. This subunit contains the active site and the acceptor peptide and donor lipid-linked oligosaccharide (LLO) binding pockets. This is Dolichyl-diphosphooligosaccharide--protein glycosyltransferase subunit stt-3 from Caenorhabditis elegans.